The chain runs to 128 residues: Large ribosomal subunit protein bL12 (128 aa).

It belongs to the bacterial ribosomal protein bL12 family. As to quaternary structure, homodimer. Part of the ribosomal stalk of the 50S ribosomal subunit. Forms a multimeric L10(L12)X complex, where L10 forms an elongated spine to which 2 to 4 L12 dimers bind in a sequential fashion. Binds GTP-bound translation factors.

Functionally, forms part of the ribosomal stalk which helps the ribosome interact with GTP-bound translation factors. Is thus essential for accurate translation. This is Large ribosomal subunit protein bL12 from Rubrobacter xylanophilus (strain DSM 9941 / JCM 11954 / NBRC 16129 / PRD-1).